The chain runs to 446 residues: Chromosomal replication initiator protein DnaA (446 aa).

The interval 1–81 (MENIADLWNS…AKLNIRFIIP (81 aa)) is domain I, interacts with DnaA modulators. The domain II stretch occupies residues 81 to 109 (PQSQTEEEVDYPPAKAKKMNDESNHLPQS). Residues 110 to 326 (MLNPKYTFDT…GALIRVVAYS (217 aa)) are domain III, AAA+ region. Residues Gly154, Gly156, Lys157, and Thr158 each contribute to the ATP site. The interval 327–446 (SLINKDINAD…QIEEINDILK (120 aa)) is domain IV, binds dsDNA.

Belongs to the DnaA family. As to quaternary structure, oligomerizes as a right-handed, spiral filament on DNA at oriC.

It is found in the cytoplasm. Plays an essential role in the initiation and regulation of chromosomal replication. ATP-DnaA binds to the origin of replication (oriC) to initiate formation of the DNA replication initiation complex once per cell cycle. Binds the DnaA box (a 9 base pair repeat at the origin) and separates the double-stranded (ds)DNA. Forms a right-handed helical filament on oriC DNA; dsDNA binds to the exterior of the filament while single-stranded (ss)DNA is stabiized in the filament's interior. The ATP-DnaA-oriC complex binds and stabilizes one strand of the AT-rich DNA unwinding element (DUE), permitting loading of DNA polymerase. After initiation quickly degrades to an ADP-DnaA complex that is not apt for DNA replication. Binds acidic phospholipids. This chain is Chromosomal replication initiator protein DnaA, found in Bacillus cytotoxicus (strain DSM 22905 / CIP 110041 / 391-98 / NVH 391-98).